Here is an 89-residue protein sequence, read N- to C-terminus: Small ribosomal subunit protein bS20 (89 aa).

It belongs to the bacterial ribosomal protein bS20 family.

Binds directly to 16S ribosomal RNA. This Sulfurovum sp. (strain NBC37-1) protein is Small ribosomal subunit protein bS20.